Consider the following 959-residue polypeptide: Glycine dehydrogenase (decarboxylating) (959 aa).

Lys704 carries the post-translational modification N6-(pyridoxal phosphate)lysine.

Belongs to the GcvP family. As to quaternary structure, the glycine cleavage system is composed of four proteins: P, T, L and H. The cofactor is pyridoxal 5'-phosphate.

It carries out the reaction N(6)-[(R)-lipoyl]-L-lysyl-[glycine-cleavage complex H protein] + glycine + H(+) = N(6)-[(R)-S(8)-aminomethyldihydrolipoyl]-L-lysyl-[glycine-cleavage complex H protein] + CO2. The glycine cleavage system catalyzes the degradation of glycine. The P protein binds the alpha-amino group of glycine through its pyridoxal phosphate cofactor; CO(2) is released and the remaining methylamine moiety is then transferred to the lipoamide cofactor of the H protein. This is Glycine dehydrogenase (decarboxylating) from Parasynechococcus marenigrum (strain WH8102).